We begin with the raw amino-acid sequence, 2087 residues long: Rho GTPase-activating protein 32 (2087 aa).

The PX; atypical domain occupies 131-245; sequence GSIQLSLSEE…LTWMEIDNKG (115 aa). The SH3 domain occupies 259-321; that stretch reads PAVGAAHVIK…PGHCVELINQ (63 aa). A Rho-GAP domain is found at 372–567; that stretch reads CDLGEHLLNS…FILNHVDVLF (196 aa). Ser-706, Ser-709, Ser-732, and Ser-738 each carry phosphoserine. The disordered stretch occupies residues 818 to 858; that stretch reads FLDSPGYSKDKPSANKKDAETGSSQCQTPGSTASSEPVSPL. The span at 825–837 shows a compositional bias: basic and acidic residues; it reads SKDKPSANKKDAE. The span at 838 to 854 shows a compositional bias: polar residues; it reads TGSSQCQTPGSTASSEP. Phosphoserine is present on residues Ser-852, Ser-856, and Ser-892. Residues 927-938 are compositionally biased toward low complexity; the sequence is SNTTAQNASSST. Disordered stretches follow at residues 927–1038, 1103–1143, and 1169–1257; these read SNTT…PPKN, PAEQ…EQHH, and VPLD…ENTS. A Phosphoserine modification is found at Ser-952. Low complexity-rich tracts occupy residues 994–1005 and 1019–1029; these read SVSSSQSKAVAS and QDSVPVSSVSL. Over residues 1124–1138 the composition is skewed to polar residues; it reads TTATGDPTHSNTTES. Residues 1172-1182 show a composition bias toward basic and acidic residues; that stretch reads DSEKSDDHVSF. The span at 1188–1203 shows a compositional bias: polar residues; sequence GKNSMPTVSFLDQDQS. At Ser-1203 the chain carries Phosphoserine. Residues 1222–1232 show a composition bias toward basic and acidic residues; sequence DKLHHPLEFAD. The interval 1391–1711 is interaction with GAB2; it reads RVPLLHLRAE…YSYAGLAPRP (321 aa). Arg-1523 and Arg-1533 each carry asymmetric dimethylarginine. At Ser-1585 the chain carries Phosphoserine. An interaction with FYN region spans residues 1685 to 2087; sequence PNRDFAFYNP…QHPETQIHAE (403 aa). The interval 1798–1896 is disordered; the sequence is PGKTGLLSVA…QFCESKNGPP (99 aa). Positions 1823–1838 are enriched in basic and acidic residues; it reads GEDRFYRRHPEAEMDR. Polar residues predominate over residues 1847–1862; the sequence is STQPEKPSLPQKQSSL. The span at 1875 to 1889 shows a compositional bias: basic and acidic residues; it reads PEHRAHQEASHRQFC. An Omega-N-methylarginine modification is found at Arg-2037.

This sequence belongs to the PX domain-containing GAP family. As to quaternary structure, interacts with NTRK1 (via cytoplasmic domain); the interaction is independent of the phosphorylation state of NTRK1. Interacts with SHC3 (via SH2 domain). Interacts with RASA1 (via SH3 domain); the interaction is necessary for the Ras activation and cell transforming activities of ARHGAP32. Interacts with GAB1 and GAB2. Interacts with CRK and CRKL. Found in a complex with CRKL and BCAR1; upon EGF stimulation BCAR1 may be replaced by EGFR. Interacts with NCK1 (via SH3 domain); NCK1 recruits phosphorylated BCAR1 to the complex. Isoform 2 interacts with FYN; the interaction appears to be dependent on tyrosine phosphorylation of ARHGAP32. Interacts with EGFR; the interaction requires EGF stimulation and is increased by SHC3. Interacts with CDC42; the interaction requires constitutively active CDC42. Interacts with CTNNB1. Interacts with GRIN2B. Interacts with DLG4 and CDH2. Interacts with GPHN. In terms of processing, isoform 2 is phosphorylated on multiple tyrosine residues by FYN. Phosphorylated tyrosine residues undergo dephosphorylation after stimulation of NMDA receptors. Phosphorylated in vitro by CaMK2 in the presence of calmodulin and calcium; which inhibits GAP activity. Isoform 1 and isoform 2 are highly expressed in brain and testis. Isoform 1 is also expressed in other tissues such as lung, liver and spleen.

The protein resides in the postsynaptic density. Its subcellular location is the cell projection. It is found in the dendritic spine. It localises to the cytoplasm. The protein localises to the cell cortex. The protein resides in the endosome membrane. Its subcellular location is the golgi apparatus membrane. It is found in the endoplasmic reticulum membrane. It localises to the membrane. Its function is as follows. GTPase-activating protein (GAP) promoting GTP hydrolysis on RHOA, CDC42 and RAC1 small GTPases. May be involved in the differentiation of neuronal cells during the formation of neurite extensions. Involved in NMDA receptor activity-dependent actin reorganization in dendritic spines. May mediate cross-talks between Ras- and Rho-regulated signaling pathways in cell growth regulation. Isoform 2 has higher GAP activity. The polypeptide is Rho GTPase-activating protein 32 (ARHGAP32) (Homo sapiens (Human)).